A 178-amino-acid chain; its full sequence is MKMDADSSCGADHRDSHGSRSRSRREREQHGRTSNRDSKKKEHKVPYFADEVREQDRVRRLRKRSPRSTRRSASRSQSSDRRHRHRSRSRNRSRSRSSERRRRQRSPRRYNPPPKIINYYLQVPPQDFYGMSGMQQRFGYQRLPHPPPFPPAPYRFRQRPPFLGAPRFGYRNAWRPPY.

2 stretches are compositionally biased toward basic and acidic residues: residues 1–18 and 25–40; these read MKMD…DSHG and RERE…DSKK. A disordered region spans residues 1–117; it reads MKMDADSSCG…RRYNPPPKII (117 aa). Basic residues-rich tracts occupy residues 59–73 and 81–108; these read RRLR…RRSA and RRHR…RSPR.

It is found in the nucleus speckle. Its function is as follows. Member of the regulatory pathway controlling female somatic sexual differentiation, regulated by Sxl. Activates dsx female-specific splicing by promoting the formation of a splicing enhancer complex which consists of tra, tra2 and sr proteins. The polypeptide is Female-specific protein transformer (tra) (Drosophila erecta (Fruit fly)).